The sequence spans 463 residues: Quinolone resistance protein NorB (463 aa).

A run of 14 helical transmembrane segments spans residues 17–37 (IGIV…VNVV), 53–73 (IAVS…GGLA), 86–106 (IILN…LLLI), 107–127 (IGRL…LSII), 142–162 (YWSI…GAVA), 165–185 (LGWR…LFLI), 201–221 (FDIK…ILIT), 230–250 (SLLF…FIVL), 273–293 (TASN…NTFV), 299–319 (YSSL…LIMI), 334–354 (PMLI…LTFL), 357–377 (IFYV…LGIY), 403–423 (MASA…YAIV), and 435–455 (IALW…LLLV).

It belongs to the major facilitator superfamily. TCR/Tet family.

The protein resides in the cell membrane. Multidrug efflux pump that acts independently of NorA and is one of the factors that confers resistance against diverse quinolones and chemical compounds. The protein is Quinolone resistance protein NorB (norB) of Staphylococcus aureus (strain USA300).